A 98-amino-acid chain; its full sequence is Gene 4 protein (98 aa).

The region spanning 41–73 (RAATDVDHKKPGNDHSRSNLQAICRVCHGKKSA) is the HNH domain. Residues 75–98 (EGVARRRELKARRKRPEQRHPGRR) form a disordered region. Residues 81 to 98 (RELKARRKRPEQRHPGRR) show a composition bias toward basic residues.

The protein is Gene 4 protein (4) of Mycobacterium (Mycobacteriophage D29).